The sequence spans 864 residues: Protein 4.1 (864 aa).

Composition is skewed to polar residues over residues 1–16 (MTTE…NSQH) and 27–41 (NSGQ…SCQT). Disordered regions lie at residues 1–122 (MTTE…GTSL), 136–170 (EPEL…DFEI), and 182–202 (IEVK…ASQK). Serine 14 is subject to Phosphoserine. A Phosphothreonine; by CDK1 modification is found at threonine 60. Basic and acidic residues predominate over residues 61–75 (PTHEDLTKNKERTSE). A compositionally biased stretch (low complexity) spans 76-87 (SRGLSRLFSSFL). A phosphoserine mark is found at serine 84, serine 85, serine 95, serine 104, serine 121, serine 149, serine 151, serine 152, serine 188, and serine 191. Over residues 101–117 (EVESDKEKGEGGQKEIE) the composition is skewed to basic and acidic residues. Polar residues predominate over residues 149-158 (SLSSAETQPA). A compositionally biased stretch (basic and acidic residues) spans 182–199 (IEVKEESPQSKAETELKA). One can recognise an FERM domain in the interval 210–491 (MHCKVSLLDD…EHHTFFRLTS (282 aa)). Position 222 is a phosphotyrosine (tyrosine 222). Threonine 378 carries the phosphothreonine modification. Residues 494–614 (TIPKSKFLAL…QAEPEPTEAW (121 aa)) form a hydrophilic region. 2 disordered regions span residues 518-572 (RQAS…VAEG) and 586-611 (KAQK…PEPT). Phosphoserine occurs at positions 521, 540, 542, and 555. Positions 587-600 (AQKETVKAEVKKED) are enriched in basic and acidic residues. Residues 601-610 (EPPEQAEPEP) are compositionally biased toward acidic residues. Positions 615–713 (KVEKTHIEVT…WDKRLSTHSP (99 aa)) are spectrin--actin-binding. Tyrosine 660 is subject to Phosphotyrosine; by EGFR. Residues serine 664, serine 674, serine 684, and serine 709 each carry the phosphoserine modification. Serine 712 bears the Phosphoserine; by CDK1 mark. Positions 714–864 (FRTLNINGQI…VHQETEIADE (151 aa)) are C-terminal (CTD). A phosphothreonine mark is found at threonine 736 and threonine 859.

As to quaternary structure, binds with a high affinity to glycophorin and with lower affinity to band III protein. Associates with the nuclear mitotic apparatus. Interacts with calmodulin. Interacts with CPAP. Interacts with DLG1. Also found to associate with contractile apparatus and tight junctions. Interacts with NUMA1; this interaction is negatively regulated by CDK1 during metaphase and promotes anaphase-specific localization of NUMA1 in symmetrically dividing cells. Interacts with ATP2B1; regulates small intestinal calcium absorption through regulation of membrane expression of ATP2B1. In terms of processing, phosphorylated at multiple sites by different protein kinases and each phosphorylation event selectively modulates the protein's functions. Post-translationally, phosphorylation on Tyr-660 reduces the ability of 4.1 to promote the assembly of the spectrin/actin/4.1 ternary complex. O-glycosylated; contains N-acetylglucosamine side chains in the C-terminal domain.

It is found in the cytoplasm. The protein resides in the cytoskeleton. The protein localises to the cell cortex. It localises to the nucleus. Its function is as follows. Protein 4.1 is a major structural element of the erythrocyte membrane skeleton. It plays a key role in regulating membrane physical properties of mechanical stability and deformability by stabilizing spectrin-actin interaction. Recruits DLG1 to membranes. Required for dynein-dynactin complex and NUMA1 recruitment at the mitotic cell cortex during anaphase. This Homo sapiens (Human) protein is Protein 4.1.